Here is a 311-residue protein sequence, read N- to C-terminus: MTSKVYDPEQRKRMITGPQWWARCKQMNVLDSFINYYDSEKHAENAVIFLHGNAASSYLWRHVVPHIEPVARCIIPDLIGMGKSGKSGNGSYRLLDHYKYLTAWFELLNLPKKIIFVGHDWGACLAFHYSYEHQDKIKAIVHAESVVDVIESWDEWPDIEEDIALIKSEEGEKMVLENNFFVETMLPSKIMRKLEPEEFAAYLEPFKEKGEVRRPTLSWPREIPLVKGGKPDVVQIVRNYNAYLRASDDLPKMFIESDPGFFSNAIVEGAKKFPNTEFVKVKGLHFSQEDAPDEMGKYIKSFVERVLKNEQ.

The AB hydrolase-1 domain maps to 45–291; the sequence is NAVIFLHGNA…KGLHFSQEDA (247 aa). Residues aspartate 162 and histidine 285 each coordinate substrate.

Monomer.

The catalysed reaction is coelenterazine h + O2 = excited coelenteramide h monoanion + hnu + CO2 + H(+). Functionally, upon binding the substrate, the enzyme catalyzes an oxygenation, producing a very short-lived hydroperoxide that cyclizes into a dioxetanone structure, which collapses, releasing a CO(2) molecule. The spontaneous breakdown of the dioxetanone releases the energy (about 50 kcal/mole) that is necessary to generate the excited state of the coelenteramide product, which is the singlet form of the monoanion. In vivo the product undergoes the process of nonradiative energy transfer to an accessory protein, a green fluorescent protein (GFP), which results in green bioluminescence. In vitro, in the absence of GFP, the product emits blue light. The sequence is that of Coelenterazine h 2-monooxygenase from Renilla reniformis (Sea pansy).